Here is a 212-residue protein sequence, read N- to C-terminus: Transmembrane protein 186 (212 aa).

At 1 to 78 (MAAVLRAVAR…YLSRLKVAQT (78 aa)) the chain is on the mitochondrial matrix side. A helical transmembrane segment spans residues 79–99 (ALTVAALPPGLYCYSQGLMPF). Over 100–101 (SS) the chain is Mitochondrial intermembrane. Residues 102 to 122 (LCLAGGVAGFALAMLCWMSHF) traverse the membrane as a helical segment. Residues 123–212 (FRRLVGILYV…QVFGVLDALK (90 aa)) are Mitochondrial matrix-facing.

It belongs to the TMEM186 family. Part of the mitochondrial complex I assembly/MCIA complex that comprises at least the core subunits TMEM126B, NDUFAF1, ECSIT and ACAD9 and complement subunits such as COA1 and TMEM186. Interacts with MT-ND3.

It is found in the mitochondrion inner membrane. In terms of biological role, as part of the MCIA complex, required for efficient assembly of the mitochondrial complex I. The sequence is that of Transmembrane protein 186 from Bos taurus (Bovine).